The primary structure comprises 284 residues: Bifunctional protein FolD (284 aa).

NADP(+) is bound by residues 166–168 (GAS) and Ile-232.

This sequence belongs to the tetrahydrofolate dehydrogenase/cyclohydrolase family. Homodimer.

The catalysed reaction is (6R)-5,10-methylene-5,6,7,8-tetrahydrofolate + NADP(+) = (6R)-5,10-methenyltetrahydrofolate + NADPH. It catalyses the reaction (6R)-5,10-methenyltetrahydrofolate + H2O = (6R)-10-formyltetrahydrofolate + H(+). It functions in the pathway one-carbon metabolism; tetrahydrofolate interconversion. Functionally, catalyzes the oxidation of 5,10-methylenetetrahydrofolate to 5,10-methenyltetrahydrofolate and then the hydrolysis of 5,10-methenyltetrahydrofolate to 10-formyltetrahydrofolate. In Glaesserella parasuis serovar 5 (strain SH0165) (Haemophilus parasuis), this protein is Bifunctional protein FolD.